A 431-amino-acid polypeptide reads, in one-letter code: Serine hydroxymethyltransferase (431 aa).

Residues Leu-126 and 130-132 (GHL) each bind (6S)-5,6,7,8-tetrahydrofolate. The residue at position 235 (Lys-235) is an N6-(pyridoxal phosphate)lysine.

This sequence belongs to the SHMT family. Homodimer. Pyridoxal 5'-phosphate serves as cofactor.

The protein localises to the cytoplasm. The catalysed reaction is (6R)-5,10-methylene-5,6,7,8-tetrahydrofolate + glycine + H2O = (6S)-5,6,7,8-tetrahydrofolate + L-serine. Its pathway is one-carbon metabolism; tetrahydrofolate interconversion. It functions in the pathway amino-acid biosynthesis; glycine biosynthesis; glycine from L-serine: step 1/1. In terms of biological role, catalyzes the reversible interconversion of serine and glycine with tetrahydrofolate (THF) serving as the one-carbon carrier. This reaction serves as the major source of one-carbon groups required for the biosynthesis of purines, thymidylate, methionine, and other important biomolecules. Also exhibits THF-independent aldolase activity toward beta-hydroxyamino acids, producing glycine and aldehydes, via a retro-aldol mechanism. This chain is Serine hydroxymethyltransferase, found in Nocardia farcinica (strain IFM 10152).